A 750-amino-acid chain; its full sequence is Sulfhydryl oxidase 1 (750 aa).

The first 32 residues, Met1–Ala32, serve as a signal peptide directing secretion. The Thioredoxin domain occupies Tyr39–Ser159. Catalysis depends on nucleophile residues Cys73 and Cys76. Intrachain disulfides connect Cys73/Cys76 and Cys104/Cys113. 2 N-linked (GlcNAc...) asparagine glycosylation sites follow: Asn133 and Asn246. An intrachain disulfide couples Cys396 to Cys408. An ERV/ALR sulfhydryl oxidase domain is found at Ser399 to Trp506. Arg404, Trp411, and His415 together coordinate FAD. Phosphoserine is present on Ser429. A disulfide bridge connects residues Cys452 and Cys455. FAD-binding positions include Asp454, His458, Trp481 to Asn488, Lys503, and Trp506. The cysteines at positions 512 and 515 are disulfide-linked. Asn578 carries N-linked (GlcNAc...) asparagine glycosylation. The tract at residues Asn578–Leu645 is disordered. Residues Pro624–Pro639 are compositionally biased toward basic and acidic residues. Residues Ile713–Tyr733 traverse the membrane as a helical segment.

The protein belongs to the quiescin-sulfhydryl oxidase (QSOX) family. Monomer. It depends on FAD as a cofactor. N-glycosylated. O-glycosylated on Thr and Ser residues.

The protein localises to the golgi apparatus membrane. It is found in the secreted. It catalyses the reaction 2 R'C(R)SH + O2 = R'C(R)S-S(R)CR' + H2O2. Catalyzes the oxidation of sulfhydryl groups in peptide and protein thiols to disulfides with the reduction of oxygen to hydrogen peroxide. Plays a role in disulfide bond formation in a variety of extracellular proteins. In fibroblasts, required for normal incorporation of laminin into the extracellular matrix, and thereby for normal cell-cell adhesion and cell migration. This Pongo abelii (Sumatran orangutan) protein is Sulfhydryl oxidase 1 (QSOX1).